The following is an 863-amino-acid chain: Alanine--tRNA ligase (863 aa).

Histidine 552, histidine 556, cysteine 656, and histidine 660 together coordinate Zn(2+).

The protein belongs to the class-II aminoacyl-tRNA synthetase family. It depends on Zn(2+) as a cofactor.

It localises to the cytoplasm. It carries out the reaction tRNA(Ala) + L-alanine + ATP = L-alanyl-tRNA(Ala) + AMP + diphosphate. Its function is as follows. Catalyzes the attachment of alanine to tRNA(Ala) in a two-step reaction: alanine is first activated by ATP to form Ala-AMP and then transferred to the acceptor end of tRNA(Ala). Also edits incorrectly charged Ser-tRNA(Ala) and Gly-tRNA(Ala) via its editing domain. This chain is Alanine--tRNA ligase, found in Alcanivorax borkumensis (strain ATCC 700651 / DSM 11573 / NCIMB 13689 / SK2).